The sequence spans 276 residues: 6-chlorohydroxyquinol 1,2-dioxygenase (276 aa).

4 residues coordinate Fe cation: Y157, Y191, H215, and H217.

Belongs to the intradiol ring-cleavage dioxygenase family. Fe(3+) is required as a cofactor.

The protein operates within aromatic compound metabolism. It participates in xenobiotic degradation. Functionally, involved in the degradation of 2,4,6-trichlorophenol (2,4,6-TCP). May catalyze the oxidation of 6-chlorohydroxyquinol (6-CHQ) to 2-chloromaleylacetate (2-CMA). This Cupriavidus pinatubonensis (strain JMP 134 / LMG 1197) (Cupriavidus necator (strain JMP 134)) protein is 6-chlorohydroxyquinol 1,2-dioxygenase.